Consider the following 530-residue polypeptide: Membrane protein insertase YidC (530 aa).

Transmembrane regions (helical) follow at residues 5–25, 348–368, 418–438, and 492–512; these read VVIA…MFPP, YGLA…PLTH, LPML…MFSI, and PVVF…YWLI.

This sequence belongs to the OXA1/ALB3/YidC family. Type 1 subfamily. As to quaternary structure, interacts with the Sec translocase complex via SecD. Specifically interacts with transmembrane segments of nascent integral membrane proteins during membrane integration.

The protein resides in the cell inner membrane. In terms of biological role, required for the insertion and/or proper folding and/or complex formation of integral membrane proteins into the membrane. Involved in integration of membrane proteins that insert both dependently and independently of the Sec translocase complex, as well as at least some lipoproteins. Aids folding of multispanning membrane proteins. The chain is Membrane protein insertase YidC from Geotalea daltonii (strain DSM 22248 / JCM 15807 / FRC-32) (Geobacter daltonii).